A 287-amino-acid chain; its full sequence is 26S proteasome non-ATPase regulatory subunit 8 (287 aa).

Position 43 is a phosphoserine (Ser-43). Positions 99-268 constitute a PCI domain; sequence PSFERYMAQL…QQKPEDTTIP (170 aa). Lys-234 participates in a covalent cross-link: Glycyl lysine isopeptide (Lys-Gly) (interchain with G-Cter in SUMO2).

This sequence belongs to the proteasome subunit S14 family. As to quaternary structure, component of the 19S proteasome regulatory particle complex. The 26S proteasome consists of a 20S core particle (CP) and two 19S regulatory subunits (RP). The regulatory particle is made of a lid composed of 9 subunits including PSMD8, a base containing 6 ATPases and few additional components. Interacts with DDI2. Interacts with TASOR.

Component of the 26S proteasome, a multiprotein complex involved in the ATP-dependent degradation of ubiquitinated proteins. This complex plays a key role in the maintenance of protein homeostasis by removing misfolded or damaged proteins, which could impair cellular functions, and by removing proteins whose functions are no longer required. Therefore, the proteasome participates in numerous cellular processes, including cell cycle progression, apoptosis, or DNA damage repair. The sequence is that of 26S proteasome non-ATPase regulatory subunit 8 (PSMD8) from Bos taurus (Bovine).